The following is a 325-amino-acid chain: Electron transfer flavoprotein subunit alpha (325 aa).

262–290 (LYIACGISGAIQHLAGMSNSKVIVAINKD) contributes to the FAD binding site.

It belongs to the ETF alpha-subunit/FixB family. In terms of assembly, heterodimer of an alpha and a beta subunit. The cofactor is FAD.

Its function is as follows. The electron transfer flavoprotein serves as a specific electron acceptor for other dehydrogenases. It transfers the electrons to the main respiratory chain via ETF-ubiquinone oxidoreductase (ETF dehydrogenase). This is Electron transfer flavoprotein subunit alpha (etfA) from Bacillus subtilis (strain 168).